The primary structure comprises 133 residues: Large ribosomal subunit protein eL19 (133 aa).

The segment at arginine 55–lysine 83 is disordered. Residues alanine 60 to lysine 83 show a composition bias toward basic residues.

Belongs to the eukaryotic ribosomal protein eL19 family. Part of the 50S ribosomal subunit.

Functionally, binds to the 23S rRNA. The protein is Large ribosomal subunit protein eL19 of Korarchaeum cryptofilum (strain OPF8).